We begin with the raw amino-acid sequence, 2157 residues long: Polyketide synthase 2 (2157 aa).

Positions 7 to 244 are N-terminal acylcarrier protein transacylase domain (SAT); the sequence is FIFGDQTGGF…IPIPIWAPYH (238 aa). Positions 374–807 constitute a Ketosynthase family 3 (KS3) domain; sequence DSKIAIIGMS…GGNSALLLED (434 aa). Catalysis depends on for beta-ketoacyl synthase activity residues Cys546, His681, and His723. Positions 908–1213 are malonyl-CoA:ACP transacylase (MAT) domain; the sequence is GFVFSGQGAQ…ASLHRKDDGW (306 aa). Ser998 acts as the For acyl/malonyl transferase activity in catalysis. Positions 1290–1605 are product template (PT) domain; sequence TSSVQKIIRQ…RSLLNKVLPP (316 aa). Residues 1294-1428 form an N-terminal hotdog fold region; it reads QKIIRQTDGP…CLLRFADPTS (135 aa). One can recognise a PKS/mFAS DH domain in the interval 1294–1600; that stretch reads QKIIRQTDGP…FLGMSRSLLN (307 aa). Catalysis depends on His1327, which acts as the Proton acceptor; for dehydratase activity. The interval 1455–1600 is C-terminal hotdog fold; that stretch reads TDSLLSRGIV…FLGMSRSLLN (146 aa). Asp1514 acts as the Proton donor; for dehydratase activity in catalysis. The interval 1626-1652 is disordered; sequence AASAKDTERRPLDIPTRAQRQPSSAQT. Residues 1643-1652 are compositionally biased toward polar residues; that stretch reads AQRQPSSAQT. The Carrier 1 domain occupies 1649-1726; the sequence is SAQTGTMGRI…ELKAFLGADQ (78 aa). Residue Ser1686 is modified to O-(pantetheine 4'-phosphoryl)serine. Residues 1733–1762 form a disordered region; sequence ACESSNGQHTPQTSDKGSGTLAVQKTDDDT. Over residues 1735–1755 the composition is skewed to polar residues; it reads ESSNGQHTPQTSDKGSGTLAV. One can recognise a Carrier 2 domain in the interval 1765–1839; it reads DMTLNRVCAI…SLQKALCGSE (75 aa). Ser1799 carries the post-translational modification O-(pantetheine 4'-phosphoryl)serine. The disordered stretch occupies residues 1840–1859; the sequence is AASNGAPEANETTPSSHRLE. Positions 1875–2151 are thioesterase (TE) domain; sequence ASPPHATSIL…MIEMGNLIGE (277 aa). Ser1981 (for thioesterase activity) is an active-site residue.

In terms of biological role, polyketide synthase; part of the Pks2 gene cluster that mediates the formation of infectious structures (appressoria), enabling these fungi to kill insects faster. The product of the Pks2 gene cluster is different from the one of Pks1 and has still not been identified. This is Polyketide synthase 2 from Metarhizium robertsii (strain ARSEF 23 / ATCC MYA-3075) (Metarhizium anisopliae (strain ARSEF 23)).